We begin with the raw amino-acid sequence, 145 residues long: Aminoglycoside N(6')-acetyltransferase type 1 (145 aa).

Residues 1–145 form the N-acetyltransferase domain; the sequence is MNIKPASEAS…KVVYFSKKID (145 aa). Residues Trp22, Tyr65, and Glu78 each contribute to the substrate site. Residue 80 to 82 coordinates acetyl-CoA; that stretch reads IYV. Substrate is bound at residue Asp114. Residue Asn119 coordinates acetyl-CoA. Residue Glu135 participates in substrate binding.

As to quaternary structure, homodimer.

It carries out the reaction kanamycin B + acetyl-CoA = N(6')-acetylkanamycin B + CoA + H(+). Functionally, catalyzes the transfer of an acetyl group from acetyl-CoA to the 6'-amino group of aminoglycoside molecules conferring resistance to antibiotics containing the purpurosamine ring including amikacin, kanamycin, tobramycin and netilmicin. This chain is Aminoglycoside N(6')-acetyltransferase type 1, found in Acinetobacter haemolyticus.